Consider the following 771-residue polypeptide: Solute carrier family 7 member 14 (771 aa).

6 consecutive transmembrane segments (helical) span residues 58–78 (LISL…SGLV), 83–103 (AGPG…LSGV), 130–150 (FVAF…TAAG), 187–207 (YPDL…ALGV), 216–236 (VLNV…FFFI), and 251–271 (WSGV…FDII). The N-linked (GlcNAc...) asparagine glycan is linked to Asn282. Helical transmembrane passes span 291–311 (ASLV…TLMV), 336–356 (FVVA…SLFP), 360–380 (VIYA…VSSY), 384–404 (PVVA…LVSL), and 407–427 (LIEM…VCVL). Phosphoserine occurs at positions 465, 468, and 488. Helical transmembrane passes span 565-585 (VTIC…FIIF), 596-616 (WAIL…FVIL), 628-648 (MAPC…YLML), and 655-675 (WIRF…YGIW). Asn676 carries N-linked (GlcNAc...) asparagine glycosylation. A disordered region spans residues 712–771 (TEGESQENWGGPAEDKGFYYQQMSDTQPNTRTSSKAKSKSKHKQNSEALIANDELDYSPE). Residues 732 to 743 (QQMSDTQPNTRT) show a composition bias toward polar residues. A compositionally biased stretch (basic residues) spans 745-754 (SKAKSKSKHK). A phosphoserine mark is found at Ser757 and Ser769.

It belongs to the amino acid-polyamine-organocation (APC) superfamily. Cationic amino acid transporter (CAT) (TC 2.A.3.3) family.

The protein localises to the lysosome membrane. The catalysed reaction is 4-aminobutanoate(in) = 4-aminobutanoate(out). Functionally, imports 4-aminobutanoate (GABA) into lysosomes. May act as a GABA sensor that regulates mTORC2-dependent INS signaling and gluconeogenesis. The transport mechanism and substrate selectivity remain to be elucidated. This chain is Solute carrier family 7 member 14, found in Bos taurus (Bovine).